A 517-amino-acid polypeptide reads, in one-letter code: MAISDVPAAAGTTATTTSDSDLRQPSLRRRSSAGVLFDAARDSGSDNSLTGKITDDDNIKDHKPNNHAASDDNVGAAANDAGQEHRQPVADFKYAYRPSVPAHRRIKESPLSSDNIFRQSHAGLFNLCIVVLVAVNSRLIIENLMKYGWLIKYGFWFSSKSLRDWPLFMCCLSLAIFPLAAFVVERLAQQKCISEPVVVLLHLIISTVELCYPVLVILRCDSAFVSGVTLMLLTCIVWLKLVSYAHTNYDMRALTVSNEKGETLPNTLIMEYPYTVTFRSLAYFMVAPTLCYQTSYPRTPSVRKGWVFRQLVKLIIFTGVMGFIIEQYMNPIVQNSTHPLKGNLLYAIERILKLSVPNVYVWLCMFYCFFHLWLNILAELVRFGDREFYKDWWNAKTVEEYWRMWNMPVHKWMVRHIYFPCLRRGIPKGAASLIAFLVSAVFHELCIAVPCHMFKLWAFIGIMFQVPLVLITNYLQNKYRNSMVGNMIFWFIFCILGQPMSVLLYYHDLMNRKGEVD.

The segment at 1–82 (MAISDVPAAA…NVGAAANDAG (82 aa)) is disordered. Residues 8 to 17 (AAAGTTATTT) are compositionally biased toward low complexity. Basic and acidic residues predominate over residues 53–64 (ITDDDNIKDHKP). Residues 71–81 (DDNVGAAANDA) are compositionally biased toward low complexity. 7 helical membrane-spanning segments follow: residues 121–141 (HAGLFNLCIVVLVAVNSRLII), 165–185 (WPLFMCCLSLAIFPLAAFVVE), 197–217 (VVVLLHLIISTVELCYPVLVI), 222–242 (SAFVSGVTLMLLTCIVWLKLV), 272–292 (YPYTVTFRSLAYFMVAPTLCY), 305–325 (GWVFRQLVKLIIFTGVMGFII), and 361–381 (VWLCMFYCFFHLWLNILAELV). An FYXDWWN motif motif is present at residues 388 to 394 (FYKDWWN). 3 helical membrane-spanning segments follow: residues 429 to 449 (GAASLIAFLVSAVFHELCIAV), 451 to 471 (CHMFKLWAFIGIMFQVPLVLI), and 484 to 504 (VGNMIFWFIFCILGQPMSVLL). The active site involves His443.

It belongs to the membrane-bound acyltransferase family. Sterol o-acyltransferase subfamily.

The protein resides in the endoplasmic reticulum membrane. The enzyme catalyses an acyl-CoA + a 1,2-diacyl-sn-glycerol = a triacyl-sn-glycerol + CoA. It functions in the pathway glycerolipid metabolism; triacylglycerol biosynthesis. Its function is as follows. Involved in triacylglycerol (TAG) synthesis. Catalyzes the acylation of the sn-3 hydroxy group of sn-1,2-diacylglycerol using acyl-CoA. This is Diacylglycerol O-acyltransferase 1C from Glycine max (Soybean).